A 270-amino-acid chain; its full sequence is MKKEMIVYSVSDSLGGTSQKLLSAVTAQYPDIIFNNSYRFPFINKEEELLDILRDAIKDDALVISTLVDGKLASVAREFSQAHGLSYLDLMHPFFEIIKEKTGTDPIEVPGTLHRLDSEYFNKISAIEFAVKYDDGKAPQGFLDSDIVLLGVSRTSKTPLSIYLANKGYKVSNLPLIPEVPLPQVLEKVDSRRLIGLVCEPEKLAKIRSHRLDSLGLTQETSYTDLEKIYQELDYSKTVFKKYGAQIINMSDKSIEETAFLIEEHLKKLN.

151–158 (GVSRTSKT) is a binding site for ADP.

Belongs to the pyruvate, phosphate/water dikinase regulatory protein family. PDRP subfamily.

The enzyme catalyses N(tele)-phospho-L-histidyl/L-threonyl-[pyruvate, phosphate dikinase] + ADP = N(tele)-phospho-L-histidyl/O-phospho-L-threonyl-[pyruvate, phosphate dikinase] + AMP + H(+). It catalyses the reaction N(tele)-phospho-L-histidyl/O-phospho-L-threonyl-[pyruvate, phosphate dikinase] + phosphate + H(+) = N(tele)-phospho-L-histidyl/L-threonyl-[pyruvate, phosphate dikinase] + diphosphate. In terms of biological role, bifunctional serine/threonine kinase and phosphorylase involved in the regulation of the pyruvate, phosphate dikinase (PPDK) by catalyzing its phosphorylation/dephosphorylation. The chain is Putative pyruvate, phosphate dikinase regulatory protein from Streptococcus gordonii (strain Challis / ATCC 35105 / BCRC 15272 / CH1 / DL1 / V288).